A 121-amino-acid polypeptide reads, in one-letter code: MARIAGVDLPNKHVSVALTYIYGISRSSARTICEKARISSACLINDLSQDELAVVRAIIDREYKVEGRLRTEVALNIKRLMDIGCYRGLRHRKGLPVRGQRTRTNARTRKGKRKTVAGKKK.

Residues 94 to 121 (GLPVRGQRTRTNARTRKGKRKTVAGKKK) form a disordered region.

This sequence belongs to the universal ribosomal protein uS13 family. Part of the 30S ribosomal subunit. Forms a loose heterodimer with protein S19. Forms two bridges to the 50S subunit in the 70S ribosome.

In terms of biological role, located at the top of the head of the 30S subunit, it contacts several helices of the 16S rRNA. In the 70S ribosome it contacts the 23S rRNA (bridge B1a) and protein L5 of the 50S subunit (bridge B1b), connecting the 2 subunits; these bridges are implicated in subunit movement. Contacts the tRNAs in the A and P-sites. This chain is Small ribosomal subunit protein uS13, found in Treponema pallidum (strain Nichols).